An 82-amino-acid chain; its full sequence is Photosystem I iron-sulfur center (82 aa).

4Fe-4S ferredoxin-type domains lie at 2–31 (AHSVKIYDTCIGCTQCVRACPTDVLEMVPW) and 40–69 (IAAAPRTEDCVGCKRCETACPTDFLSIRVY). C11, C14, C17, C21, C49, C52, C55, and C59 together coordinate [4Fe-4S] cluster.

As to quaternary structure, the cyanobacterial PSI reaction center is composed of one copy each of PsaA,B,C,D,E,F,I,J,K,L,M and X, and forms trimeric complexes. Requires [4Fe-4S] cluster as cofactor.

The protein resides in the cellular thylakoid membrane. It carries out the reaction reduced [plastocyanin] + hnu + oxidized [2Fe-2S]-[ferredoxin] = oxidized [plastocyanin] + reduced [2Fe-2S]-[ferredoxin]. Functionally, apoprotein for the two 4Fe-4S centers FA and FB of photosystem I (PSI); essential for photochemical activity. FB is the terminal electron acceptor of PSI, donating electrons to ferredoxin. The C-terminus interacts with PsaA/B/D and helps assemble the protein into the PSI complex. Required for binding of PsaD and PsaE to PSI. PSI is a plastocyanin/cytochrome c6-ferredoxin oxidoreductase, converting photonic excitation into a charge separation, which transfers an electron from the donor P700 chlorophyll pair to the spectroscopically characterized acceptors A0, A1, FX, FA and FB in turn. The chain is Photosystem I iron-sulfur center from Synechococcus sp. (strain JA-2-3B'a(2-13)) (Cyanobacteria bacterium Yellowstone B-Prime).